The following is a 425-amino-acid chain: Transmembrane protein 184A (425 aa).

The next 7 membrane-spanning stretches (helical) occupy residues 51–71 (LFLTSALARGVSGVFVWTALL), 96–116 (LLFIVPIYAFDSWLSLLLLGG), 133–153 (FVIYSFLTLCFQYLGGESAIM), 189–209 (TLQFCIVKPVMALITIILQAF), 226–246 (VTLVYNASVSLALYALFLFYF), 261–281 (FLTIKAIIFLSFWQGMLLAIL), and 303–323 (LAAGYQNFLICVEMLFASLAL). The tract at residues 375–425 (QYTQQSTHEAPGPGQGGHPAPSTHPGPASGSGGGKKSRNIEKRMLIPSEDL) is disordered. A compositionally biased stretch (low complexity) spans 392-402 (HPAPSTHPGPA).

This sequence belongs to the TMEM184 family. In terms of tissue distribution, expressed in testis, pancreas, parotid salivary gland and mammary gland (at protein level).

It is found in the cell membrane. The protein resides in the cytoplasm. It localises to the perinuclear region. Its subcellular location is the cytoplasmic vesicle membrane. The protein localises to the early endosome membrane. It is found in the endosome. The protein resides in the cytoplasmic vesicle. It localises to the secretory vesicle membrane. In terms of biological role, acts as a heparin receptor in vascular cells. May be involved in vesicle transport in exocrine cells and Sertoli cells. The protein is Transmembrane protein 184A (Tmem184a) of Mus musculus (Mouse).